Consider the following 146-residue polypeptide: Basic phospholipase A2 beta-bungarotoxin A1 chain (146 aa).

Residues 1 to 19 (MNPAHLLVLPAVCVSFLGA) form the signal peptide. A propeptide spanning residues 20 to 27 (SIIPPQSL) is cleaved from the precursor. 6 disulfides stabilise this stretch: C54–C145, C56–C72, C71–C126, C78–C119, C87–C112, and C105–C117. Ca(2+)-binding residues include Y55, G57, and G59. Residue H75 is part of the active site. Residue D76 coordinates Ca(2+). The active site involves D120.

This sequence belongs to the phospholipase A2 family. Group I subfamily. D49 sub-subfamily. Heterodimer with beta-bungarotoxin B chain; disulfide-linked. The A chain has phospholipase A2 activity and the B chain shows homology with the basic protease inhibitors. The cofactor is Ca(2+). As to expression, expressed by the venom gland.

Its subcellular location is the secreted. The catalysed reaction is a 1,2-diacyl-sn-glycero-3-phosphocholine + H2O = a 1-acyl-sn-glycero-3-phosphocholine + a fatty acid + H(+). Functionally, snake venom phospholipase A2 (PLA2) that inhibits neuromuscular transmission by blocking acetylcholine release from the nerve termini. PLA2 catalyzes the calcium-dependent hydrolysis of the 2-acyl groups in 3-sn-phosphoglycerides. This is Basic phospholipase A2 beta-bungarotoxin A1 chain from Bungarus flaviceps flaviceps (Red-headed krait).